The sequence spans 283 residues: Nucleotide-binding protein THEYE_A0235 (283 aa).

Position 12–19 (Gly12–Thr19) interacts with ATP. Asp62–Val65 is a binding site for GTP.

The protein belongs to the RapZ-like family.

In terms of biological role, displays ATPase and GTPase activities. The polypeptide is Nucleotide-binding protein THEYE_A0235 (Thermodesulfovibrio yellowstonii (strain ATCC 51303 / DSM 11347 / YP87)).